The sequence spans 144 residues: Bacilliredoxin BH1716 (144 aa).

This sequence belongs to the bacilliredoxin family.

This Halalkalibacterium halodurans (strain ATCC BAA-125 / DSM 18197 / FERM 7344 / JCM 9153 / C-125) (Bacillus halodurans) protein is Bacilliredoxin BH1716.